Consider the following 137-residue polypeptide: MPSPKRTKFRKQHRGRLKGIATRSNSICFGKFALQALEPAWITARQIEAGRRAITRYARRGGKLWIRIFPDKPITARPAETRMGSGKGSPEYWVAIAKPGKILYEIGGVSENVAEAAMKIAAYKMPIRTAFIGININ.

It belongs to the universal ribosomal protein uL16 family. As to quaternary structure, part of the 50S ribosomal subunit.

Its subcellular location is the plastid. The sequence is that of Large ribosomal subunit protein uL16c from Aneura mirabilis (Parasitic liverwort).